The chain runs to 709 residues: DNA ligase (709 aa).

A disordered region spans residues 1 to 20; that stretch reads MTATHRGAQADASAPAGPLP. Residues 52–56, 101–102, and Glu146 contribute to the NAD(+) site; these read DAEYD and SL. Lys148 acts as the N6-AMP-lysine intermediate in catalysis. Residues Arg169, Glu205, Lys322, and Lys346 each coordinate NAD(+). Residues Cys440, Cys443, Cys458, and Cys464 each coordinate Zn(2+). The region spanning 623 to 709 is the BRCT domain; it reads KAPAPLSGKT…AEAGAAPAQE (87 aa).

The protein belongs to the NAD-dependent DNA ligase family. LigA subfamily. Mg(2+) serves as cofactor. It depends on Mn(2+) as a cofactor.

It catalyses the reaction NAD(+) + (deoxyribonucleotide)n-3'-hydroxyl + 5'-phospho-(deoxyribonucleotide)m = (deoxyribonucleotide)n+m + AMP + beta-nicotinamide D-nucleotide.. Its function is as follows. DNA ligase that catalyzes the formation of phosphodiester linkages between 5'-phosphoryl and 3'-hydroxyl groups in double-stranded DNA using NAD as a coenzyme and as the energy source for the reaction. It is essential for DNA replication and repair of damaged DNA. The chain is DNA ligase from Cupriavidus necator (strain ATCC 17699 / DSM 428 / KCTC 22496 / NCIMB 10442 / H16 / Stanier 337) (Ralstonia eutropha).